Consider the following 411-residue polypeptide: 2,3-bisphosphoglycerate-independent phosphoglycerate mutase (411 aa).

It belongs to the BPG-independent phosphoglycerate mutase family. A-PGAM subfamily.

The catalysed reaction is (2R)-2-phosphoglycerate = (2R)-3-phosphoglycerate. It participates in carbohydrate degradation; glycolysis; pyruvate from D-glyceraldehyde 3-phosphate: step 3/5. Functionally, catalyzes the interconversion of 2-phosphoglycerate and 3-phosphoglycerate. The polypeptide is 2,3-bisphosphoglycerate-independent phosphoglycerate mutase (Pyrobaculum aerophilum (strain ATCC 51768 / DSM 7523 / JCM 9630 / CIP 104966 / NBRC 100827 / IM2)).